The chain runs to 192 residues: MKYAPLSRDEGRTLVKIARMAIEEHLRGSKNLRLPDDLPDVFRQRRGVFVTLEKKGNLRGCIGYPEPVKPLIDALIEAAISAATGDPRFPPVKPEELDDIDVEVSVLTPPEPLEVESPADYPSLIRVGVDGLIVERGWARGLLLPQVATEWGWDAEEFLCNTCMKAGLPPDCFYDPETRVYRFQAQIFHEDG.

The region spanning 9–192 is the AMMECR1 domain; the sequence is DEGRTLVKIA…FQAQIFHEDG (184 aa).

The sequence is that of Protein MTH_857 from Methanothermobacter thermautotrophicus (strain ATCC 29096 / DSM 1053 / JCM 10044 / NBRC 100330 / Delta H) (Methanobacterium thermoautotrophicum).